Reading from the N-terminus, the 338-residue chain is Putative transport protein TM_1349 (338 aa).

Transmembrane regions (helical) follow at residues 20–40 (ILISFLVFKIFPDVFAVIVLM), 68–88 (ALLLFFFVMVYSLYMIIPPVF), 147–167 (VSVTTIIVFTLFGLGYTVFYI), 203–223 (VIFINAVIIGLSYWIVFEAFN), 239–259 (FIPIVGVVLEYIPVLLFSLTL), 263–283 (GVLLIALFAILIHAVAFVVFI), and 297–317 (IILSILFFGKLFGLFGSFVGV).

It belongs to the autoinducer-2 exporter (AI-2E) (TC 2.A.86) family.

It localises to the cell membrane. The sequence is that of Putative transport protein TM_1349 from Thermotoga maritima (strain ATCC 43589 / DSM 3109 / JCM 10099 / NBRC 100826 / MSB8).